Reading from the N-terminus, the 505-residue chain is MPNKAVSIYYLNFNQTGTCISMGTSNGFLIFNCAPFGKFYSEDSGGYGIVEMLFSTSLLALVGIGDQPMLSPRRLRIINTKKHSIICEVTFPTKILSVKMNRSRIVVVLKEQIYIYDINNMRLLHTIEIAPNPEGLVALSCNTDTNLLAYPSPPKVISSDINPNVNTNTINIARSKSEELIANSKDNNLQNKFGTTLEGQQNIDEDKAANGYQVDQNTDTAENDINSGDVIIYDMSTLQPLMVIEAHKGEIAALNFSFDGSLIATASEKGTIIRVFSTSSGAKLYQFRRGTYPTKIYSLSFSQDNRFLSVTCSSKTVHIFKLTKTGEERTSGGADDADSDDSGNENDGDNNSVGNGDVSSLLSDNDIESTREPYVDASRKTMGRMIRNSSQKLSRRAAKTLGQLFPIKVTSILEPSRHFASLKLPTDSNISGNVKTLCSIGNEMEVDKVEYPELFDGQDQGDRTKVTMLPIRVISSEGYLYNYVLDPERGGDCLLLSQYSTAIDQ.

WD repeat units follow at residues 246–286 and 291–330; these read AHKG…KLYQ and TYPTKIYSLSFSQDNRFLSVTCSSKTVHIFKLTKTGEERT. The L/FRRG motif signature appears at 287–291; it reads FRRGT. Residues 328–380 form a disordered region; sequence ERTSGGADDADSDDSGNENDGDNNSVGNGDVSSLLSDNDIESTREPYVDASRK. The segment covering 335–348 has biased composition (acidic residues); the sequence is DDADSDDSGNENDG. A compositionally biased stretch (low complexity) spans 349-360; that stretch reads DNNSVGNGDVSS. A compositionally biased stretch (basic and acidic residues) spans 368–379; that stretch reads ESTREPYVDASR.

This sequence belongs to the WD repeat PROPPIN family. As to quaternary structure, component of the PI(3,5)P2 regulatory complex.

The protein resides in the preautophagosomal structure membrane. The protein localises to the vacuole membrane. It localises to the endosome membrane. The PI(3,5)P2 regulatory complex regulates both the synthesis and turnover of phosphatidylinositol 3,5-bisphosphate (PtdIns(3,5)P2). Necessary for proper vacuole morphology. Plays an important role in osmotically-induced vacuole fragmentation. Required for cytoplasm to vacuole transport (Cvt) vesicle formation, pexophagy and starvation-induced autophagy. Involved in correct ATG9 trafficking to the pre-autophagosomal structure. Might also be involved in premeiotic DNA replication. The protein is Autophagy-related protein 18 (ATG18) of Candida glabrata (strain ATCC 2001 / BCRC 20586 / JCM 3761 / NBRC 0622 / NRRL Y-65 / CBS 138) (Yeast).